We begin with the raw amino-acid sequence, 122 residues long: Small ribosomal subunit protein uS12c (122 aa).

The protein belongs to the universal ribosomal protein uS12 family. As to quaternary structure, part of the 30S ribosomal subunit.

It is found in the plastid. The protein localises to the chloroplast. Functionally, with S4 and S5 plays an important role in translational accuracy. Located at the interface of the 30S and 50S subunits. This chain is Small ribosomal subunit protein uS12c (rps12), found in Mesostigma viride (Green alga).